A 92-amino-acid chain; its full sequence is Ictacalcin (92 aa).

EF-hand domains lie at I12–N47 and S49–L84. 6 residues coordinate Ca(2+): T27, E32, D62, N64, D66, and E73.

It belongs to the S-100 family. As to expression, abundant in epithelial cells of olfactory rosette, barbel, skin and gill but not brain or muscle.

In terms of biological role, plays an important role in catfish calcium homeostasis. This Ictalurus punctatus (Channel catfish) protein is Ictacalcin.